The sequence spans 204 residues: Guanylate kinase (204 aa).

Residues 18–196 (PKLFTISAPA…SYEILKSIFI (179 aa)) enclose the Guanylate kinase-like domain. 25–32 (APAGAGKT) serves as a coordination point for ATP.

It belongs to the guanylate kinase family.

The protein localises to the cytoplasm. It carries out the reaction GMP + ATP = GDP + ADP. In terms of biological role, essential for recycling GMP and indirectly, cGMP. The sequence is that of Guanylate kinase from Chlamydia caviae (strain ATCC VR-813 / DSM 19441 / 03DC25 / GPIC) (Chlamydophila caviae).